A 502-amino-acid polypeptide reads, in one-letter code: Maturase K (502 aa).

This sequence belongs to the intron maturase 2 family. MatK subfamily.

The protein resides in the plastid. Its subcellular location is the chloroplast. Functionally, usually encoded in the trnK tRNA gene intron. Probably assists in splicing its own and other chloroplast group II introns. This chain is Maturase K, found in Cephalotaxus fortunei (Chinese plum-yew).